A 685-amino-acid chain; its full sequence is DNA ligase (685 aa).

Residues 48–52 (DAEYD), 97–98 (SL), and E131 each bind NAD(+). The N6-AMP-lysine intermediate role is filled by K133. Residues R154, E190, K304, and K328 each coordinate NAD(+). 4 residues coordinate Zn(2+): C422, C425, C440, and C445. The BRCT domain occupies 603–685 (PEEGPLSGRR…RLLSGEERPG (83 aa)).

The protein belongs to the NAD-dependent DNA ligase family. LigA subfamily. It depends on Mg(2+) as a cofactor. Mn(2+) is required as a cofactor.

The catalysed reaction is NAD(+) + (deoxyribonucleotide)n-3'-hydroxyl + 5'-phospho-(deoxyribonucleotide)m = (deoxyribonucleotide)n+m + AMP + beta-nicotinamide D-nucleotide.. Functionally, DNA ligase that catalyzes the formation of phosphodiester linkages between 5'-phosphoryl and 3'-hydroxyl groups in double-stranded DNA using NAD as a coenzyme and as the energy source for the reaction. It is essential for DNA replication and repair of damaged DNA. The protein is DNA ligase of Rubrobacter xylanophilus (strain DSM 9941 / JCM 11954 / NBRC 16129 / PRD-1).